The following is a 212-amino-acid chain: Probable GTP-binding protein EngB (212 aa).

The region spanning 27–201 (GGIEIAFAGR…TRILSDWYQP (175 aa)) is the EngB-type G domain. GTP contacts are provided by residues 35–42 (GRSNAGKS), 62–66 (GRTQL), 80–83 (DLPG), 147–150 (TKAD), and 180–182 (FSS). Positions 42 and 64 each coordinate Mg(2+).

This sequence belongs to the TRAFAC class TrmE-Era-EngA-EngB-Septin-like GTPase superfamily. EngB GTPase family. It depends on Mg(2+) as a cofactor.

Necessary for normal cell division and for the maintenance of normal septation. In Tolumonas auensis (strain DSM 9187 / NBRC 110442 / TA 4), this protein is Probable GTP-binding protein EngB.